Consider the following 353-residue polypeptide: MHLRHLFSPRLRGSLLLGSLLVASSFSTLAAEDMLRKAVGKGAYEMAWSQQENALWLATSQSRKLDKGGVVYRLDPVTLEITQAIHNDLKPFGATINAATQTLWFGNTINSAVTAIDAKTGDVKGRLVLDARKRTEEVRPLQPRELVADAATNTIYISGVGKESAIWVVDGETIKLKTTIENTGKMSTGLALDSKAQRLYTTNADGEFITIDTASNKILSRKKLLDDGKEHFFINLSLDTAGHRAFITDSKATEVLVVDTRNGNILAKIAAPASLAVLYNPTRNEAYVTHRQAGQVSVIDAKTYNVVKTFDTPTYPNSLALSADGKTLYVSVKQKSTREQEATQPDDVIRIAL.

An N-terminal signal peptide occupies residues 1–30; that stretch reads MHLRHLFSPRLRGSLLLGSLLVASSFSTLA.

This is an uncharacterized protein from Salmonella typhi.